The primary structure comprises 575 residues: MVNVGPSHAAVAVDASEARKRNISEEVFELRDKKDSTVVIEGEAPVRTFTSSSSNHEREDTYVSKRQVMRDIFAKYLKFIGPGLMVSVAYIDPGNYSTAVDAGASNQFSLLCIILLSNFIAIFLQCLCIKLGSVTGLDLSRACREYLPRWLNWTLYFFAECAVIATDIAEVIGTAIALNILIKVPLPAGVAITVVDVFLIMFTYKPGASSIRFIRIFECFVAVLVVGVCICFAIELAYIPKSTSVKQVFRGFVPSAQMFDHNGIYTAISILGATVMPHSLFLGSALVQPRLLDYDVKHGNYTVSEEQDKVKKSKSTEEIMEEKYFNYRPTNAAIKYCMKYSMVELSITLFTLALFVNCAILVVAGSTLYNSPEADGADLFTIHELLSRNLAPAAGTIFMLALLLSGQSAGVVCTMSGQIVSEGHINWKLQPWQRRLATRCISIIPCLVISICIGREALSKALNASQVVLSIVLPFLVAPLIFFTCKKSIMKTEITVDHTEEDSHNHQNNNDRSAGSVIEQDGSSGMEIENGKDVKIVYMANNWIITVIAIIVWLFLSLLNVYAIVQLGMSHGDIS.

Residues 1 to 70 are Extracellular-facing; sequence MVNVGPSHAA…TYVSKRQVMR (70 aa). Serine 24 carries the phosphoserine modification. Residues lysine 33 and lysine 34 each participate in a glycyl lysine isopeptide (Lys-Gly) (interchain with G-Cter in ubiquitin) cross-link. Residues 71 to 91 form a helical membrane-spanning segment; it reads DIFAKYLKFIGPGLMVSVAYI. Residues 92–108 lie on the Cytoplasmic side of the membrane; the sequence is DPGNYSTAVDAGASNQF. The helical transmembrane segment at 109-129 threads the bilayer; it reads SLLCIILLSNFIAIFLQCLCI. Residues 130-156 are Extracellular-facing; that stretch reads KLGSVTGLDLSRACREYLPRWLNWTLY. Residues 157–177 traverse the membrane as a helical segment; that stretch reads FFAECAVIATDIAEVIGTAIA. Residues 178-179 are Cytoplasmic-facing; sequence LN. Residues 180–200 form a helical membrane-spanning segment; the sequence is ILIKVPLPAGVAITVVDVFLI. The Extracellular segment spans residues 201–218; that stretch reads MFTYKPGASSIRFIRIFE. The helical transmembrane segment at 219–239 threads the bilayer; that stretch reads CFVAVLVVGVCICFAIELAYI. Topologically, residues 240-266 are cytoplasmic; the sequence is PKSTSVKQVFRGFVPSAQMFDHNGIYT. Residues 267-287 form a helical membrane-spanning segment; sequence AISILGATVMPHSLFLGSALV. Residues 288–344 are Extracellular-facing; it reads QPRLLDYDVKHGNYTVSEEQDKVKKSKSTEEIMEEKYFNYRPTNAAIKYCMKYSMVE. Residues 345–365 form a helical membrane-spanning segment; the sequence is LSITLFTLALFVNCAILVVAG. Topologically, residues 366-396 are cytoplasmic; that stretch reads STLYNSPEADGADLFTIHELLSRNLAPAAGT. A helical transmembrane segment spans residues 397 to 417; it reads IFMLALLLSGQSAGVVCTMSG. Residues 418 to 463 lie on the Extracellular side of the membrane; sequence QIVSEGHINWKLQPWQRRLATRCISIIPCLVISICIGREALSKALN. A helical transmembrane segment spans residues 464-484; sequence ASQVVLSIVLPFLVAPLIFFT. The Cytoplasmic segment spans residues 485-543; that stretch reads CKKSIMKTEITVDHTEEDSHNHQNNNDRSAGSVIEQDGSSGMEIENGKDVKIVYMANNW. The interval 498 to 517 is disordered; the sequence is HTEEDSHNHQNNNDRSAGSV. The chain crosses the membrane as a helical span at residues 544-564; that stretch reads IITVIAIIVWLFLSLLNVYAI. Over 565–575 the chain is Extracellular; that stretch reads VQLGMSHGDIS.

This sequence belongs to the NRAMP family.

The protein resides in the cell membrane. It carries out the reaction Mn(2+)(in) = Mn(2+)(out). In terms of biological role, high-affinity manganese transporter involved in manganese uptake from the extracellular environment. Also contributes to cellular accumulation of other divalent metal ions such as cadmium, cobalt, copper, iron and nickel. The chain is Manganese transporter SMF1 (SMF1) from Saccharomyces cerevisiae (strain ATCC 204508 / S288c) (Baker's yeast).